Reading from the N-terminus, the 45-residue chain is Large ribosomal subunit protein bL34c (45 aa).

Positions 1 to 10 (MSKGFSNGTN) are enriched in polar residues. The disordered stretch occupies residues 1-45 (MSKGFSNGTNIKRVRKSGFRARMSNSSGRKILNSRRRKQRKKIAL). Positions 32–45 (LNSRRRKQRKKIAL) are enriched in basic residues.

It belongs to the bacterial ribosomal protein bL34 family.

The protein localises to the plastid. It localises to the chloroplast. The sequence is that of Large ribosomal subunit protein bL34c from Gracilaria tenuistipitata var. liui (Red alga).